Consider the following 462-residue polypeptide: UDP-N-acetylmuramoylalanine--D-glutamate ligase (462 aa).

120–126 contributes to the ATP binding site; that stretch reads GTNGKTT.

This sequence belongs to the MurCDEF family.

The protein localises to the cytoplasm. It catalyses the reaction UDP-N-acetyl-alpha-D-muramoyl-L-alanine + D-glutamate + ATP = UDP-N-acetyl-alpha-D-muramoyl-L-alanyl-D-glutamate + ADP + phosphate + H(+). The protein operates within cell wall biogenesis; peptidoglycan biosynthesis. Cell wall formation. Catalyzes the addition of glutamate to the nucleotide precursor UDP-N-acetylmuramoyl-L-alanine (UMA). This is UDP-N-acetylmuramoylalanine--D-glutamate ligase from Bdellovibrio bacteriovorus (strain ATCC 15356 / DSM 50701 / NCIMB 9529 / HD100).